The sequence spans 218 residues: Adenylate kinase (218 aa).

An ATP-binding site is contributed by 10–15 (GAGKGT). Positions 30–59 (STGDMLRAAVKAGTPLGLQAKAVMDSGSLV) are NMP. AMP is bound by residues threonine 31, arginine 36, 57 to 59 (SLV), 85 to 88 (GFPR), and glutamine 92. Positions 122-159 (GRRSHPASGRTYHVRFNPPKIDGKDDLTGEALLQREDD) are LID. ATP-binding positions include arginine 123 and 132-133 (TY). 2 residues coordinate AMP: arginine 156 and arginine 167. Glycine 203 contributes to the ATP binding site.

Belongs to the adenylate kinase family. Monomer.

The protein localises to the cytoplasm. The catalysed reaction is AMP + ATP = 2 ADP. It functions in the pathway purine metabolism; AMP biosynthesis via salvage pathway; AMP from ADP: step 1/1. In terms of biological role, catalyzes the reversible transfer of the terminal phosphate group between ATP and AMP. Plays an important role in cellular energy homeostasis and in adenine nucleotide metabolism. This Verminephrobacter eiseniae (strain EF01-2) protein is Adenylate kinase.